Consider the following 504-residue polypeptide: D-alanine--D-alanyl carrier protein ligase (504 aa).

152-153 (TS) lines the ATP pocket. D197 contributes to the D-alanine binding site. Position 292–297 (292–297 (NTYGPT)) interacts with ATP. Position 301 (V301) interacts with D-alanine. Residues D383, 394–397 (YNGR), and K492 contribute to the ATP site. D-alanine is bound at residue K492.

The protein belongs to the ATP-dependent AMP-binding enzyme family. DltA subfamily.

The protein resides in the cytoplasm. It catalyses the reaction holo-[D-alanyl-carrier protein] + D-alanine + ATP = D-alanyl-[D-alanyl-carrier protein] + AMP + diphosphate. It functions in the pathway cell wall biogenesis; lipoteichoic acid biosynthesis. Functionally, catalyzes the first step in the D-alanylation of lipoteichoic acid (LTA), the activation of D-alanine and its transfer onto the D-alanyl carrier protein (Dcp) DltC. In an ATP-dependent two-step reaction, forms a high energy D-alanyl-AMP intermediate, followed by transfer of the D-alanyl residue as a thiol ester to the phosphopantheinyl prosthetic group of the Dcp. D-alanylation of LTA plays an important role in modulating the properties of the cell wall in Gram-positive bacteria, influencing the net charge of the cell wall. This is D-alanine--D-alanyl carrier protein ligase from Bacillus cereus (strain G9842).